The primary structure comprises 133 residues: MMTETVRTWRHIPQRYNLTGSKCLQCGNVFFPSRIICPECRRKGKLEELKFSGKGRIHSYSVINTPTDEFKDIAPYVVAIVELEEGARVTSQIVDCDPDSIEIGDEVEMVFRKVREEGEDGVISYGFKFKPKT.

Residues cysteine 23, cysteine 26, cysteine 37, and cysteine 40 each coordinate Zn(2+).

Belongs to the scaffold protein DUF35 family. In terms of assembly, interacts with acetoacetyl-CoA thiolase and HMG-CoA synthase (HMGCS) that catalyzes the first and second step in the mevalonate pathway, respectively.

Functionally, functions as a scaffold to connect the acetoacetyl-CoA thiolase and HMG-CoA synthase (HMGCS) dimers in the channeling thiolase/HMGCS complex, which allows for efficient coupling of the endergonic thiolase reaction with the exergonic HMGCS reaction. This Methanothermobacter thermautotrophicus (strain ATCC 29096 / DSM 1053 / JCM 10044 / NBRC 100330 / Delta H) (Methanobacterium thermoautotrophicum) protein is DUF35 domain-containing scaffold protein.